The primary structure comprises 78 residues: Small nuclear ribonucleoprotein F (78 aa).

The 72-residue stretch at 7 to 78 folds into the Sm domain; it reads NPKPFLQGLI…NVLWVGESTV (72 aa).

Belongs to the snRNP Sm proteins family. SmF/LSm6 subfamily. Belongs to the 40S cdc5-associated complex (or cwf complex), a spliceosome sub-complex reminiscent of a late-stage spliceosome composed of the U2, U5 and U6 snRNAs and at least brr2, cdc5, cwf2/prp3, cwf3/syf1, cwf4/syf3, cwf5/ecm2, spp42/cwf6, cwf7/spf27, cwf8, cwf9, cwf10, cwf11, cwf12, prp45/cwf13, cwf14, cwf15, cwf16, cwf17, cwf18, cwf19, cwf20, cwf21, cwf22, cwf23, cwf24, cwf25, cwf26, cyp7/cwf27, cwf28, cwf29/ist3, lea1, msl1, prp5/cwf1, prp10, prp12/sap130, prp17, prp22, sap61, sap62, sap114, sap145, slu7, smb1, smd1, smd3, smf1, smg1 and syf2.

It localises to the nucleus. Its subcellular location is the cytoplasm. In terms of biological role, plays a role in pre-mRNA splicing as a core component of the spliceosomal U1, U2, U4 and U5 small nuclear ribonucleoproteins (snRNPs), the building blocks of the spliceosome. This is Small nuclear ribonucleoprotein F (smf1) from Schizosaccharomyces pombe (strain 972 / ATCC 24843) (Fission yeast).